The chain runs to 495 residues: N-succinylglutamate 5-semialdehyde dehydrogenase (495 aa).

220 to 225 (GSAGTG) contributes to the NAD(+) binding site. Catalysis depends on residues Glu243 and Cys277.

The protein belongs to the aldehyde dehydrogenase family. AstD subfamily.

It carries out the reaction N-succinyl-L-glutamate 5-semialdehyde + NAD(+) + H2O = N-succinyl-L-glutamate + NADH + 2 H(+). It participates in amino-acid degradation; L-arginine degradation via AST pathway; L-glutamate and succinate from L-arginine: step 4/5. In terms of biological role, catalyzes the NAD-dependent reduction of succinylglutamate semialdehyde into succinylglutamate. In Enterobacter sp. (strain 638), this protein is N-succinylglutamate 5-semialdehyde dehydrogenase.